The chain runs to 187 residues: Elongation factor P (187 aa).

This sequence belongs to the elongation factor P family.

The protein resides in the cytoplasm. Its pathway is protein biosynthesis; polypeptide chain elongation. Functionally, involved in peptide bond synthesis. Stimulates efficient translation and peptide-bond synthesis on native or reconstituted 70S ribosomes in vitro. Probably functions indirectly by altering the affinity of the ribosome for aminoacyl-tRNA, thus increasing their reactivity as acceptors for peptidyl transferase. This chain is Elongation factor P, found in Helicobacter acinonychis (strain Sheeba).